A 195-amino-acid polypeptide reads, in one-letter code: U8 snoRNA-decapping enzyme (195 aa).

A Nudix hydrolase domain is found at 18–173; that stretch reads GWRHACHALL…IGSAREQLLE (156 aa). Residues His24, Arg50, and Phe57 each contribute to the substrate site. Mn(2+) is bound by residues Gly59, Glu76, Glu80, and His99. Positions 61 to 82 match the Nudix box motif; sequence FVDTQDRSLEDGLNRELREELG. Gln170 is a binding site for substrate. Glu173 contributes to the Mn(2+) binding site.

It belongs to the Nudix hydrolase family. NUDT16 subfamily. In terms of assembly, homodimer. It depends on Mg(2+) as a cofactor. Mn(2+) is required as a cofactor. Requires Co(2+) as cofactor. Expressed strongly in lung, kidney, adrenal gland, testis, heart and brain.

It localises to the nucleus. It is found in the nucleoplasm. The protein resides in the nucleolus. The protein localises to the cytoplasm. It catalyses the reaction a 5'-end (N(7)-methyl 5'-triphosphoguanosine)-ribonucleoside in mRNA + H2O = N(7)-methyl-GDP + a 5'-end phospho-ribonucleoside in mRNA + 2 H(+). The catalysed reaction is IDP + H2O = IMP + phosphate + H(+). The enzyme catalyses dIDP + H2O = dIMP + phosphate + H(+). It carries out the reaction a 5'-end NAD(+)-phospho-ribonucleoside in mRNA + H2O = a 5'-end phospho-adenosine-phospho-ribonucleoside in mRNA + beta-nicotinamide D-ribonucleotide + 2 H(+). It catalyses the reaction a 5'-end FAD-phospho-ribonucleoside in mRNA + H2O = a 5'-end phospho-adenosine-phospho-ribonucleoside in mRNA + FMN + 2 H(+). The catalysed reaction is a 5'-end CoA-ribonucleoside in mRNA + H2O = a 5'-end phospho-adenosine-phospho-ribonucleoside in mRNA + (R)-4'-phosphopantetheine + 2 H(+). Its activity is regulated as follows. The phosphatase activity is inhibited by the product IMP. RNA-binding and decapping enzyme that catalyzes the cleavage of the cap structure of snoRNAs and mRNAs in a metal-dependent manner. Part of the U8 snoRNP complex that is required for the accumulation of mature 5.8S and 28S rRNA. Has diphosphatase activity and removes m7G and/or m227G caps from U8 snoRNA and leaves a 5'monophosphate on the RNA. Also catalyzes the cleavage of the cap structure on mRNAs. Does not hydrolyze cap analog structures like 7-methylguanosine nucleoside triphosphate (m7GpppG). Also hydrolysis m7G- and m227G U3-capped RNAs but with less efficiencies. Has broad substrate specificity with manganese or cobalt as cofactor and can act on various RNA species. Binds to the U8 snoRNA; metal is not required for RNA-binding. May play a role in the regulation of snoRNAs and mRNAs degradation. Also acts as a phosphatase; hydrolyzes the non-canonical purine nucleotides inosine diphosphate (IDP) and deoxyinosine diphosphate (dITP) as well as guanosine diphosphate (GDP), deoxyguanosine diphosphate (dGDP), xanthine diphosphate (XDP), inosine triphosphate (ITP) and deoxyinosine triphosphate (ITP) to their respective monophosphate derivatives and does not distinguish between the deoxy- and ribose forms. The order of activity with different substrates is IDP &gt; dIDP &gt;&gt; GDP = dGDP &gt; XDP = ITP = dITP. Binds strongly to GTP, ITP and XTP. Participates in the hydrolysis of dIDP/IDP and probably excludes non-canonical purines from RNA and DNA precursor pools, thus preventing their incorporation into RNA and DNA and avoiding chromosomal lesions. Exhibits decapping activity towards NAD-capped RNAs and FAD-capped RNAs. Exhibits decapping activity towards dpCoA-capped RNAs in vitro. The protein is U8 snoRNA-decapping enzyme (NUDT16) of Homo sapiens (Human).